Here is a 328-residue protein sequence, read N- to C-terminus: 3-dehydroquinate synthase (328 aa).

Belongs to the archaeal-type DHQ synthase family.

It carries out the reaction 2-amino-2,3,7-trideoxy-D-lyxo-hept-6-ulosonate + NAD(+) + H2O = 3-dehydroquinate + NH4(+) + NADH + H(+). In terms of biological role, catalyzes the oxidative deamination and cyclization of 2-amino-3,7-dideoxy-D-threo-hept-6-ulosonic acid (ADH) to yield 3-dehydroquinate (DHQ), which is fed into the canonical shikimic pathway of aromatic amino acid biosynthesis. In Methanosphaerula palustris (strain ATCC BAA-1556 / DSM 19958 / E1-9c), this protein is 3-dehydroquinate synthase.